The following is a 369-amino-acid chain: Ferredoxin--NADP reductase 2 (369 aa).

Residues 1 to 21 (MDLSIPNPVADATRQVEGGSP) are disordered. FAD-binding residues include D58, Q66, Y71, V111, F146, D311, and T352.

Belongs to the ferredoxin--NADP reductase type 2 family. Homodimer. Requires FAD as cofactor.

The catalysed reaction is 2 reduced [2Fe-2S]-[ferredoxin] + NADP(+) + H(+) = 2 oxidized [2Fe-2S]-[ferredoxin] + NADPH. This chain is Ferredoxin--NADP reductase 2, found in Cupriavidus taiwanensis (strain DSM 17343 / BCRC 17206 / CCUG 44338 / CIP 107171 / LMG 19424 / R1) (Ralstonia taiwanensis (strain LMG 19424)).